An 815-amino-acid chain; its full sequence is Phosphatidylinositol 4-phosphate 5-kinase 9 (815 aa).

8 MORN repeats span residues 58 to 80 (YSGS…DGCV), 81 to 103 (YDGE…SGAS), 104 to 126 (YDGE…NKLT), 127 to 149 (YKGR…NGDV), 150 to 172 (FEGS…NKNV), 173 to 195 (YLGD…TGDS), 196 to 218 (YEGS…DGGC), and 219 to 240 (YVGT…AGTR). The PIPK domain occupies 391–809 (GHRSYDLMLS…RFLEFIKKVF (419 aa)). The interval 769 to 790 (YNMTKKIEHAYKSLHFDSLSIS) is activation loop.

As to quaternary structure, interacts with CINV1. Widely expressed.

Its subcellular location is the membrane. It localises to the nucleus. The enzyme catalyses a 1,2-diacyl-sn-glycero-3-phospho-(1D-myo-inositol 4-phosphate) + ATP = a 1,2-diacyl-sn-glycero-3-phospho-(1D-myo-inositol-4,5-bisphosphate) + ADP + H(+). Functionally, plays a role in sugar-mediated root development. Interaction with CINV1 induces repression of CINV1 activity and negative regulation of sugar-mediated root cell elongation. The sequence is that of Phosphatidylinositol 4-phosphate 5-kinase 9 (PIP5K9) from Arabidopsis thaliana (Mouse-ear cress).